The sequence spans 660 residues: Protein NEDD1 (660 aa).

WD repeat units lie at residues 1–31 (MQENLRFASSGDDIKIWDASSMTLVDKFNPH), 32–71 (TSPHGISSICWSSNNNFLVTASSSGDKIVVSSCKCKPVPL), 75–114 (AEGQKQTCVNLNSTSMYLVSGGLNNTVNIWDLKSKRVHRS), 117–156 (DHKDQVTCVTYNWNDCYIASGSLSGEIILHSVTTNLSSTP), 160–200 (GSNQ…PYHN), 204–244 (VHKA…LVKT), 246–285 (VADTPLTAVDFMPDGATLAIGSSRGKIYQYDLRMLKSPVK), and 289–332 (AHKT…NAAS). At serine 325 the chain carries Phosphoserine. The disordered stretch occupies residues 369 to 411 (QEKAGLPRSINTDTLSKETDSGKNQDFSSFDDTGKSSLGDMFS). Phosphothreonine; by PLK1 is present on threonine 382. At serine 397 the chain carries Phosphoserine; by PLK1. Serine 411 is subject to Phosphoserine. Phosphoserine; by PLK1 is present on serine 426. Residues serine 468 and serine 516 each carry the phosphoserine modification. Over residues 507–523 (GAESGNLNTSPSSNQTR) the composition is skewed to polar residues. The interval 507-532 (GAESGNLNTSPSSNQTRNSEKFEKPE) is disordered. At threonine 550 the chain carries Phosphothreonine; by CDK1. Phosphoserine; by PLK1 is present on serine 637.

Interacts with FAM29A. Interacts with HSPA1A and HSPA1B. Interacts with gamma-tubulin in a HSPA1A/B-dependent manner. During mitosis, prior phosphorylation on Thr-550 by CDK1 promotes subsequent phosphorylation by PLK1 on Thr-382, Ser-397, Ser-426 and Ser-637. Phosphorylated NEDD1 can interact with gamma-tubulin for targeting the gamma-tubulin ring complex (gTuRC) to the centrosome, an important step for spindle formation.

It localises to the cytoplasm. Its subcellular location is the cytoskeleton. It is found in the microtubule organizing center. The protein localises to the centrosome. Required for mitosis progression. Promotes the nucleation of microtubules from the spindle. The protein is Protein NEDD1 (NEDD1) of Homo sapiens (Human).